The following is a 306-amino-acid chain: MSEYQNILTGVQVRTAPHSAPIAKGIFPRLGKPGFSYWLGKIGDAQIGPIYLGTTGVLSLVFGFFAIEIIGFNLLASVNWSPMEFGRQFFWLGLEPPAAEYGLGFAPLAEGGWWQIAGFFLTTSILLWWVRMYRRARALKMGTHTAWAFASAIFLFLSLGFIRPLLMGNFSESVPFGIFPHLEWTNSFSLNYGNFFYNPFHMLSIAFLYGSALLSAMHGATILAVSRLGGDREVEQITDRGTAAERAALFWRWTMGFNATMESIHRWAWWFAVLCTFTGAIGILLTGTVVDNWFEWGVKHGLAPAP.

The next 3 helical transmembrane spans lie at 53–79, 111–140, and 143–168; these read GTTG…ASVN, GGWW…RALK, and THTA…LLMG. The (7R,8Z)-bacteriochlorophyll b site is built by His-181 and His-201. Residues 198–226 form a helical membrane-spanning segment; that stretch reads NPFHMLSIAFLYGSALLSAMHGATILAVS. Residues His-218 and Glu-233 each contribute to the Fe cation site. Trp-251 contacts a ubiquinone. Residues 260-286 traverse the membrane as a helical segment; the sequence is TMESIHRWAWWFAVLCTFTGAIGILLT. His-265 serves as a coordination point for Fe cation.

Belongs to the reaction center PufL/M/PsbA/D family. In terms of assembly, reaction center is composed of four bacteriochlorophylls, two bacteriopheophytins, two ubiquinones, one iron, and three highly hydrophobic polypeptide chains (designated L, M, and H).

It is found in the cellular chromatophore membrane. Functionally, the reaction center is a membrane-bound complex that mediates the initial photochemical event in the electron transfer process of photosynthesis. This is Reaction center protein M chain (pufM) from Rhodospirillum rubrum.